Consider the following 829-residue polypeptide: Ectonucleotide pyrophosphatase/phosphodiesterase C27A7.1 (829 aa).

A helical; Signal-anchor for type II membrane protein transmembrane segment spans residues Val54–Leu74. Thr224 (nucleophile) is an active-site residue. N-linked (GlcNAc...) asparagine glycosylation is found at Asn296, Asn424, Asn514, Asn542, Asn582, Asn649, Asn733, and Asn748. A disulfide bridge links Cys439 with Cys782.

This sequence belongs to the nucleotide pyrophosphatase/phosphodiesterase family.

It is found in the membrane. Probable phosphodiesterase. The sequence is that of Ectonucleotide pyrophosphatase/phosphodiesterase C27A7.1 from Caenorhabditis elegans.